We begin with the raw amino-acid sequence, 490 residues long: Cytochrome P450 71D11 (490 aa).

Position 427 (Cys-427) interacts with heme.

Belongs to the cytochrome P450 family. The cofactor is heme.

This chain is Cytochrome P450 71D11 (CYP71D11), found in Lotus japonicus (Lotus corniculatus var. japonicus).